A 264-amino-acid chain; its full sequence is 5'-nucleotidase SurE (264 aa).

A divalent metal cation is bound by residues Asp-9, Asp-10, Ser-40, and Asn-95.

The protein belongs to the SurE nucleotidase family. The cofactor is a divalent metal cation.

Its subcellular location is the cytoplasm. It carries out the reaction a ribonucleoside 5'-phosphate + H2O = a ribonucleoside + phosphate. In terms of biological role, nucleotidase that shows phosphatase activity on nucleoside 5'-monophosphates. This Helicobacter hepaticus (strain ATCC 51449 / 3B1) protein is 5'-nucleotidase SurE.